Consider the following 98-residue polypeptide: MTLFSSISSISNPMTSSKSSISSFGSGTSMGSNSIACGGCGGSGGILGLGLGLGLGLDLTGGSRSRGACGGNGGNRGNGNGGMGGGKSPCCGGCCCGI.

A disordered region spans residues 1–29; that stretch reads MTLFSSISSISNPMTSSKSSISSFGSGTS.

The protein belongs to the hssA/B family.

The polypeptide is HssA/B-like protein 36 (hssl36) (Dictyostelium discoideum (Social amoeba)).